The chain runs to 347 residues: DNA-directed RNA polymerase subunit alpha (347 aa).

An alpha N-terminal domain (alpha-NTD) region spans residues 1–243; the sequence is MLIKQGERLI…DQISVFINFD (243 aa). Residues 260 to 347 are alpha C-terminal domain (alpha-CTD); sequence VNEHLFKSID…EWKRKQQNEA (88 aa).

It belongs to the RNA polymerase alpha chain family. In terms of assembly, homodimer. The RNAP catalytic core consists of 2 alpha, 1 beta, 1 beta' and 1 omega subunit. When a sigma factor is associated with the core the holoenzyme is formed, which can initiate transcription.

The enzyme catalyses RNA(n) + a ribonucleoside 5'-triphosphate = RNA(n+1) + diphosphate. In terms of biological role, DNA-dependent RNA polymerase catalyzes the transcription of DNA into RNA using the four ribonucleoside triphosphates as substrates. The chain is DNA-directed RNA polymerase subunit alpha from Desulfovibrio desulfuricans (strain ATCC 27774 / DSM 6949 / MB).